Consider the following 428-residue polypeptide: MTTLRKLPIALAVAAGVLSTQAMAVDFHGYARSGIGWTGSGGEQQCFKTTGAQSKYRLGNECETYAELKLGQELWKEGDKSFYLDTNVAYSVSQRDDWESTDPAFREANVQGKNLIESLPGSTMWAGKRFYQRHDVHMIDFYYWDISGPGAGLEAIDLGFGKLSVAATRNSEAGGSSAWINNQRKDADKTINDVYDIRLAGLETNPGGSLEFGVDYGRANTQDDYSLAPNASKDGVLLTAEHTQSMMGGFNKFVVQYATDSMTSWNSGHSQGTSVNNNGHMLRVIDHGAINLAEKWDMMYVALYQDTDWDNNNGTTWYSVGVRPMYKWTPIMSTLLEAGYDNVKSQRTGDRNGQYKLTLAQQWQAGDSIWSRPAIRVFATYANWDEKWGYNNVDKSPDNGLAQNGTIGTDSRGKSNEVTFGAQFEAWW.

The signal sequence occupies residues 1 to 24 (MTTLRKLPIALAVAAGVLSTQAMA).

Belongs to the porin LamB (TC 1.B.3) family. In terms of assembly, homotrimer formed of three 18-stranded antiparallel beta-barrels, containing three independent channels.

The protein localises to the cell outer membrane. It carries out the reaction beta-maltose(in) = beta-maltose(out). Functionally, involved in the transport of maltose and maltodextrins. The protein is Maltoporin of Yersinia enterocolitica serotype O:8 / biotype 1B (strain NCTC 13174 / 8081).